The chain runs to 1144 residues: ATP-dependent helicase/deoxyribonuclease subunit B (1144 aa).

The UvrD-like helicase ATP-binding domain occupies 1–276 (MAIRYVFGRA…IDLDRNERPV (276 aa)). 8-15 (GRAGRGKS) provides a ligand contact to ATP. The region spanning 274-584 (RPVLPKVQEI…LVGSIERSKS (311 aa)) is the UvrD-like helicase C-terminal domain. [4Fe-4S] cluster contacts are provided by cysteine 784, cysteine 1102, cysteine 1105, and cysteine 1111.

This sequence belongs to the helicase family. AddB/RexB type 1 subfamily. Heterodimer of AddA and AddB. Mg(2+) serves as cofactor. It depends on [4Fe-4S] cluster as a cofactor.

Its function is as follows. The heterodimer acts as both an ATP-dependent DNA helicase and an ATP-dependent, dual-direction single-stranded exonuclease. Recognizes the chi site generating a DNA molecule suitable for the initiation of homologous recombination. The AddB subunit has 5' -&gt; 3' nuclease activity but not helicase activity. This chain is ATP-dependent helicase/deoxyribonuclease subunit B, found in Alkaliphilus oremlandii (strain OhILAs) (Clostridium oremlandii (strain OhILAs)).